Reading from the N-terminus, the 292-residue chain is Nucleophosmin (292 aa).

N-acetylmethionine is present on Met1. Residues 1–117 (MEDSMDMDMS…PVHISGQHLV (117 aa)) are necessary for interaction with APEX1. A required for interaction with SENP3 region spans residues 1 to 185 (MEDSMDMDMS…DDDDFDEEET (185 aa)). A Phosphoserine; by PLK1 and PLK2 modification is found at Ser4. A Phosphoserine modification is found at Ser10. Lys27 participates in a covalent cross-link: Glycyl lysine isopeptide (Lys-Gly) (interchain with G-Cter in SUMO2). At Lys32 the chain carries N6-acetyllysine; alternate. Lys32 is covalently cross-linked (Glycyl lysine isopeptide (Lys-Gly) (interchain with G-Cter in SUMO1); alternate). Lys32 participates in a covalent cross-link: Glycyl lysine isopeptide (Lys-Gly) (interchain with G-Cter in SUMO2); alternate. Phosphoserine is present on Ser43. Tyr67 bears the Phosphotyrosine mark. Position 70 is a phosphoserine (Ser70). A phosphothreonine mark is found at Thr75 and Thr95. Phosphoserine occurs at positions 125 and 139. The segment at 138-248 (MSGKRSAPGG…PSSVEDIKAK (111 aa)) is disordered. A Glycyl lysine isopeptide (Lys-Gly) (interchain with G-Cter in SUMO2) cross-link involves residue Lys141. N6-acetyllysine; alternate is present on Lys150. Residue Lys150 forms a Glycyl lysine isopeptide (Lys-Gly) (interchain with G-Cter in SUMO2); alternate linkage. The Nuclear localization signal motif lies at 152 to 157 (PQKKVK). Lys154 bears the N6-acetyllysine mark. Residues 159 to 186 (DEDDEDDDEDDEDDEDDDDDDFDEEETE) show a composition bias toward acidic residues. An interaction with NOP2 region spans residues 186 to 214 (EEKVPVKKSVRDTPAKNAQKSNQNGKDLK). Residues 187–199 (EKVPVKKSVRDTP) show a composition bias toward basic and acidic residues. The Nuclear localization signal signature appears at 190–196 (PVKKSVR). Position 198 is a phosphothreonine; by CDK1 and CDK2 (Thr198). Residues 201–210 (KNAQKSNQNG) show a composition bias toward polar residues. Ser206 is subject to ADP-ribosylserine. Position 211 is an N6-acetyllysine (Lys211). Lys214 participates in a covalent cross-link: Glycyl lysine isopeptide (Lys-Gly) (interchain with G-Cter in SUMO2). A Phosphothreonine; by CDK1 modification is found at Thr217. Residues 221–233 (KGQESFKKQEKTP) show a composition bias toward basic and acidic residues. Ser225 is subject to Phosphoserine. The residue at position 227 (Lys227) is an N6-acetyllysine. Lys228 carries the post-translational modification N6-acetyllysine; alternate. Residue Lys228 forms a Glycyl lysine isopeptide (Lys-Gly) (interchain with G-Cter in SUMO); alternate linkage. Phosphothreonine; by CDK1 is present on residues Thr232 and Thr235. Residues Ser240 and Ser241 each carry the phosphoserine modification. The required for nucleolar localization stretch occupies residues 241–292 (SVEDIKAKMQASIEKGGSLPKVEAKFINYVKNCFRMTDQEAIQDLWQWRKSL). Lys246 is covalently cross-linked (Glycyl lysine isopeptide (Lys-Gly) (interchain with G-Cter in SUMO1); alternate). Glycyl lysine isopeptide (Lys-Gly) (interchain with G-Cter in SUMO2); alternate cross-links involve residues Lys246 and Lys248. Position 248 is an N6-acetyllysine; alternate (Lys248). Ser252 is subject to Phosphoserine. Lys255 carries the N6-acetyllysine; alternate modification. Residue Lys255 forms a Glycyl lysine isopeptide (Lys-Gly) (interchain with G-Cter in SUMO1); alternate linkage. Lys255 is covalently cross-linked (Glycyl lysine isopeptide (Lys-Gly) (interchain with G-Cter in SUMO2); alternate). The residue at position 258 (Ser258) is a Phosphoserine. Residues Lys261, Lys265, and Lys271 each participate in a glycyl lysine isopeptide (Lys-Gly) (interchain with G-Cter in SUMO2); alternate cross-link. Lys261 participates in a covalent cross-link: Glycyl lysine isopeptide (Lys-Gly) (interchain with G-Cter in SUMO); alternate. N6-acetyllysine; alternate occurs at positions 265 and 271. A Glycyl lysine isopeptide (Lys-Gly) (interchain with G-Cter in SUMO1); alternate cross-link involves residue Lys265. Residue Lys265 is modified to N6-succinyllysine; alternate. Thr277 is modified (phosphothreonine). Lys290 carries the N6-acetyllysine modification.

The protein belongs to the nucleoplasmin family. As to quaternary structure, decamer formed by two pentameric rings associated in a head-to-head fashion. Disulfide-linked dimers under certain conditions. Interacts with NSUN2 and SENP3. The SWAP complex consists of NPM1, NCL, PARP1 and SWAP70. Interacts with the methylated form of RPS10. Interacts (via N-terminal domain) with APEX1; the interaction is RNA-dependent and decreases peroxide-damaged cells. Interacts with NEK2. Interacts with ROCK2 and BRCA2. Interacts with RPGR. Interacts with CENPW. Interacts with EIF2AK2/PKR. Interacts with DDX31; this interaction prevents interaction between NPM1 and HDM2. Interacts with MYC; competitive with NOP53. Interacts with NOP53; the interaction is direct and competitive with MYC. Interacts with LRRC34. Interacts with RRP1B. Interacts with NPM3. Interacts with ALKBH2. Interacts with TTF1 (via C-terminal region). Interacts with NOP2. Interacts with ARID3C (via REKLES DOMAIN); the interaction mediates ARID3C nuclear shuttling. Acetylated at C-terminal lysine residues, thereby increasing affinity to histones. Post-translationally, ADP-ribosylated. In terms of processing, phosphorylated at Ser-4 by PLK1 and PLK2. Phosphorylation at Ser-4 by PLK2 in S phase is required for centriole duplication and is sufficient to trigger centriole replication. Phosphorylation at Ser-4 by PLK1 takes place during mitosis. Phosphorylated by CDK2 at Ser-125 and Thr-198. Phosphorylation at Thr-198 may trigger initiation of centrosome duplication. Phosphorylated by CDK1 at Thr-198, Thr-217, Thr-232 and Thr-235 during cell mitosis. When these four sites are phosphorated, RNA-binding activity seem to be abolished. May be phosphorylated at Ser-70 by NEK2. The Thr-198 phosphorylated form has higher affinity for ROCK2. Sumoylated by ARF. Post-translationally, ubiquitinated. Ubiquitination leads to proteasomal degradation. Deubiquitinated by USP36. In terms of tissue distribution, expressed in B-cells that have been induced to switch to various Ig isotypes.

Its subcellular location is the nucleus. It localises to the nucleolus. The protein localises to the nucleoplasm. It is found in the cytoplasm. The protein resides in the cytoskeleton. Its subcellular location is the microtubule organizing center. It localises to the centrosome. Functionally, involved in diverse cellular processes such as ribosome biogenesis, centrosome duplication, protein chaperoning, histone assembly, cell proliferation, and regulation of tumor suppressors p53/TP53 and ARF. Binds ribosome presumably to drive ribosome nuclear export. Associated with nucleolar ribonucleoprotein structures and bind single-stranded nucleic acids. Acts as a chaperonin for the core histones H3, H2B and H4. Stimulates APEX1 endonuclease activity on apurinic/apyrimidinic (AP) double-stranded DNA but inhibits APEX1 endonuclease activity on AP single-stranded RNA. May exert a control of APEX1 endonuclease activity within nucleoli devoted to repair AP on rDNA and the removal of oxidized rRNA molecules. In concert with BRCA2, regulates centrosome duplication. Regulates centriole duplication: phosphorylation by PLK2 is able to trigger centriole replication. Negatively regulates the activation of EIF2AK2/PKR and suppresses apoptosis through inhibition of EIF2AK2/PKR autophosphorylation. Antagonizes the inhibitory effect of ATF5 on cell proliferation and relieves ATF5-induced G2/M blockade. In complex with MYC enhances the transcription of MYC target genes. May act as chaperonin or cotransporter in the nucleolar localization of transcription termination factor TTF1. The protein is Nucleophosmin (Npm1) of Mus musculus (Mouse).